Here is a 667-residue protein sequence, read N- to C-terminus: Glycine--tRNA ligase beta subunit (667 aa).

It belongs to the class-II aminoacyl-tRNA synthetase family. Tetramer of two alpha and two beta subunits.

It localises to the cytoplasm. It catalyses the reaction tRNA(Gly) + glycine + ATP = glycyl-tRNA(Gly) + AMP + diphosphate. In Rickettsia canadensis (strain McKiel), this protein is Glycine--tRNA ligase beta subunit.